A 558-amino-acid polypeptide reads, in one-letter code: Serine palmitoyltransferase 2 (558 aa).

A compositionally biased stretch (acidic residues) spans His33–Val42. Positions His33–Ile57 are disordered. Residue Lys384 is modified to N6-(pyridoxal phosphate)lysine.

It belongs to the class-II pyridoxal-phosphate-dependent aminotransferase family. In terms of assembly, heterodimer of sptl-1/sptl-2. The cofactor is pyridoxal 5'-phosphate.

The enzyme catalyses L-serine + hexadecanoyl-CoA + H(+) = 3-oxosphinganine + CO2 + CoA. It functions in the pathway lipid metabolism; sphingolipid metabolism. Functionally, component of the serine palmitoyltransferase (SPT) that catalyzes the first committed step in sphingolipid biosynthesis, which is the condensation of an acyl-CoA species and L-serine. The catalytic core is composed of a heterodimer of sptl-1 and sptl-2 or sptl-1 and sptl-3. Required for the specification of abicobasal polarity and development of the gut lumen. This chain is Serine palmitoyltransferase 2 (sptl-2), found in Caenorhabditis elegans.